We begin with the raw amino-acid sequence, 420 residues long: Phosphoglycerate kinase, cytosolic (420 aa).

Residues Val23, Asp24, Phe25, Asn26, Arg39, Ser61, His62, Gly64, Arg65, Arg135, His171, and Arg172 each coordinate (2R)-3-phosphoglycerate. ADP contacts are provided by Gly217 and Ala218. A CDP-binding site is contributed by Gly217. The AMP site is built by Ala218 and Lys219. Ala218 provides a ligand contact to ATP. Position 218 (Ala218) interacts with Mg(2+). Lys219 lines the (2R)-3-phosphoglycerate pocket. A CDP-binding site is contributed by Asp222. Position 222 (Asp222) interacts with Mg(2+). 2 residues coordinate ADP: Lys223 and Gly241. Residue Lys223 participates in AMP binding. Lys223 contributes to the ATP binding site. CDP is bound at residue Gly241. Positions 242 and 314 each coordinate AMP. The ATP site is built by Ala242 and Ala314. Residues Ala314 and Asn338 each contribute to the ADP site. Positions 339 and 344 each coordinate CDP. Residues Phe344, Glu345, Glu377, and Ser378 each contribute to the ADP site. Glu345 is an AMP binding site. 3 residues coordinate ATP: Glu345, Glu377, and Ser378. A Mg(2+)-binding site is contributed by Glu377.

This sequence belongs to the phosphoglycerate kinase family. In terms of assembly, monomer. The cofactor is Mg(2+).

It localises to the cytoplasm. It carries out the reaction (2R)-3-phosphoglycerate + ATP = (2R)-3-phospho-glyceroyl phosphate + ADP. It functions in the pathway carbohydrate degradation; glycolysis; pyruvate from D-glyceraldehyde 3-phosphate: step 2/5. This chain is Phosphoglycerate kinase, cytosolic, found in Trypanosoma brucei brucei.